We begin with the raw amino-acid sequence, 452 residues long: GTPase Der (452 aa).

EngA-type G domains follow at residues 9-170 (KIIA…PEED) and 185-362 (LQIV…KTWN). GTP-binding positions include 15–22 (GRPNVGKS), 62–66 (DTPGL), 124–127 (NKCE), 191–198 (GRPNAGKS), 238–242 (DTAGL), and 303–306 (NKWD). A KH-like domain is found at 363-448 (KKITTSKLNE…PIRFNYIKTK (86 aa)).

Belongs to the TRAFAC class TrmE-Era-EngA-EngB-Septin-like GTPase superfamily. EngA (Der) GTPase family. Associates with the 50S ribosomal subunit.

In terms of biological role, GTPase that plays an essential role in the late steps of ribosome biogenesis. The chain is GTPase Der from Rickettsia bellii (strain RML369-C).